Here is a 207-residue protein sequence, read N- to C-terminus: Guanylate kinase (207 aa).

The Guanylate kinase-like domain maps to 4 to 184 (GTLYIVSAPS…ALTDLKTIIR (181 aa)). Residue 11–18 (APSGAGKS) participates in ATP binding.

Belongs to the guanylate kinase family.

It is found in the cytoplasm. It carries out the reaction GMP + ATP = GDP + ADP. Functionally, essential for recycling GMP and indirectly, cGMP. The chain is Guanylate kinase from Escherichia coli O157:H7.